We begin with the raw amino-acid sequence, 98 residues long: Integration host factor subunit alpha (98 aa).

This sequence belongs to the bacterial histone-like protein family. In terms of assembly, heterodimer of an alpha and a beta chain.

Functionally, this protein is one of the two subunits of integration host factor, a specific DNA-binding protein that functions in genetic recombination as well as in transcriptional and translational control. In Mannheimia succiniciproducens (strain KCTC 0769BP / MBEL55E), this protein is Integration host factor subunit alpha.